The primary structure comprises 135 residues: D-ribose pyranase (135 aa).

The Proton donor role is filled by His20. Residues Asp28, His102, and 124 to 126 (YSN) contribute to the substrate site.

The protein belongs to the RbsD / FucU family. RbsD subfamily. As to quaternary structure, homodecamer.

It localises to the cytoplasm. The catalysed reaction is beta-D-ribopyranose = beta-D-ribofuranose. It participates in carbohydrate metabolism; D-ribose degradation; D-ribose 5-phosphate from beta-D-ribopyranose: step 1/2. Its function is as follows. Catalyzes the interconversion of beta-pyran and beta-furan forms of D-ribose. In Thermotoga petrophila (strain ATCC BAA-488 / DSM 13995 / JCM 10881 / RKU-1), this protein is D-ribose pyranase.